The primary structure comprises 384 residues: D-alanine--D-alanine ligase (384 aa).

An ATP-grasp domain is found at 167 to 374 (KKLFAAEGLP…YPTLLATMVD (208 aa)). 195-250 (CERLSLPVFVKPARGGSSIGISRVSSWGQLPSAIAYARRHDPKVIVEAAVNGRELE) serves as a coordination point for ATP. Asp-329, Glu-341, and Asn-343 together coordinate Mg(2+).

It belongs to the D-alanine--D-alanine ligase family. The cofactor is Mg(2+). Requires Mn(2+) as cofactor.

The protein localises to the cytoplasm. It carries out the reaction 2 D-alanine + ATP = D-alanyl-D-alanine + ADP + phosphate + H(+). The protein operates within cell wall biogenesis; peptidoglycan biosynthesis. In terms of biological role, cell wall formation. This Mycobacterium leprae (strain TN) protein is D-alanine--D-alanine ligase.